The sequence spans 236 residues: Lipoprotein signal peptidase (236 aa).

A run of 4 helical transmembrane segments spans residues 8–28 (FYGI…WVYF), 44–64 (WFKL…FGFT), 68–88 (VLLT…IWNL), and 98–118 (LLWG…DSIF). Active-site residues include Asp-141 and Asp-174. Residues 166–186 (CLPVFNLADVAILAGVALIVL) traverse the membrane as a helical segment.

The protein belongs to the peptidase A8 family.

Its subcellular location is the cell inner membrane. The catalysed reaction is Release of signal peptides from bacterial membrane prolipoproteins. Hydrolyzes -Xaa-Yaa-Zaa-|-(S,diacylglyceryl)Cys-, in which Xaa is hydrophobic (preferably Leu), and Yaa (Ala or Ser) and Zaa (Gly or Ala) have small, neutral side chains.. It participates in protein modification; lipoprotein biosynthesis (signal peptide cleavage). Its function is as follows. This protein specifically catalyzes the removal of signal peptides from prolipoproteins. The chain is Lipoprotein signal peptidase from Amoebophilus asiaticus (strain 5a2).